The sequence spans 209 residues: Transcription factor 23 (209 aa).

Disordered stretches follow at residues 1–20 and 54–85; these read MSQE…GHNK and LSRA…ARER. The span at 72–85 shows a compositional bias: basic and acidic residues; that stretch reads GRSEASPENAARER. The 53-residue stretch at 75 to 127 folds into the bHLH domain; that stretch reads EASPENAARERTRVKTLRQAFLALQAALPAVPPDTKLSKLDVLVLATSYIAHL.

As to quaternary structure, forms inactive heterodimeric complex with TCF3. As to expression, highly expressed in the uterus (predominantly in myometrium), ovary, and testis. Expression in the uterus is higher in the diestrus phase than in the estrus phase and reaches a maximum at 7.5 dpc. Expression declines towards the time of delivery and returns to the non-pregnant level 4 days after delivery. Low expression seen in lung, heart, intestine, and spleen.

The protein resides in the nucleus. Its function is as follows. Inhibits E-box-mediated binding and transactivation of bHLH factors. Inhibitory effect is similar to that of ID proteins. Inhibits the formation of TCF3 and MYOD1 homodimers and heterodimers. Lacks DNA binding activity. May be involved in the regulation or modulation of smooth muscle contraction of the uterus during pregnancy and particularly around the time of delivery. Seems to play a role in the inhibition of myogenesis. This is Transcription factor 23 (Tcf23) from Mus musculus (Mouse).